Consider the following 376-residue polypeptide: Transcriptional regulator STP4 (376 aa).

Disordered stretches follow at residues 25-58 (QNYCSIKSPSPTSTPTSTSLTMTSPPQLHNPHAS), 89-122 (SSNSPTPSNSSYSPTLLIPSNDRPASSSVYSNSS), and 137-210 (VNCI…NWKP). 2 stretches are compositionally biased toward low complexity: residues 32–50 (SPSPTSTPTSTSLTMTSPP) and 89–103 (SSNSPTPSNSSYSPT). Composition is skewed to polar residues over residues 146–183 (PRSTSNLTENSEQSFTSQQSHPAISSNATITSPQLSVK) and 191–200 (EPQNSNTIIS). The segment at 241–263 (HICKYCERGFARPNDLFRHVKCH) adopts a C2H2-type zinc-finger fold.

Its subcellular location is the nucleus. Its function is as follows. Probable transcription factor involved in response to cell wall damage. The chain is Transcriptional regulator STP4 (STP4) from Candida albicans (strain SC5314 / ATCC MYA-2876) (Yeast).